The primary structure comprises 116 residues: Large ribosomal subunit protein bL17 (116 aa).

It belongs to the bacterial ribosomal protein bL17 family. As to quaternary structure, part of the 50S ribosomal subunit. Contacts protein L32.

The protein is Large ribosomal subunit protein bL17 of Gloeothece citriformis (strain PCC 7424) (Cyanothece sp. (strain PCC 7424)).